A 296-amino-acid chain; its full sequence is NH(3)-dependent NAD(+) synthetase (296 aa).

ATP is bound at residue 30–37 (GVSGGLDS). Asp-36 lines the Mg(2+) pocket. Arg-157 provides a ligand contact to deamido-NAD(+). Glu-182 serves as a coordination point for Mg(2+). Deamido-NAD(+)-binding residues include Lys-190 and Asp-197. Residues Lys-206 and Ser-228 each contribute to the ATP site.

The protein belongs to the NAD synthetase family. Homodimer.

The catalysed reaction is deamido-NAD(+) + NH4(+) + ATP = AMP + diphosphate + NAD(+) + H(+). It functions in the pathway cofactor biosynthesis; NAD(+) biosynthesis; NAD(+) from deamido-NAD(+) (ammonia route): step 1/1. Catalyzes the ATP-dependent amidation of deamido-NAD to form NAD. Uses ammonia as a nitrogen source. The protein is NH(3)-dependent NAD(+) synthetase of Coprothermobacter proteolyticus (strain ATCC 35245 / DSM 5265 / OCM 4 / BT).